The following is a 478-amino-acid chain: Putative multidrug resistance outer membrane protein MdtQ (478 aa).

The N-terminal stretch at 1-21 (MNRDSFYPAIACFPLLLMLAG) is a signal peptide. Cys22 is lipidated: N-palmitoyl cysteine. The S-diacylglycerol cysteine moiety is linked to residue Cys22.

It belongs to the outer membrane factor (OMF) (TC 1.B.17) family.

It localises to the cell outer membrane. In terms of biological role, could be involved in resistance to puromycin, acriflavine and tetraphenylarsonium chloride. The chain is Putative multidrug resistance outer membrane protein MdtQ (mdtQ) from Shigella flexneri.